Consider the following 159-residue polypeptide: Large ribosomal subunit protein uL11 (159 aa).

It belongs to the universal ribosomal protein uL11 family. In terms of assembly, part of the ribosomal stalk of the 50S ribosomal subunit. Interacts with L10 and the large rRNA to form the base of the stalk. L10 forms an elongated spine to which L12 dimers bind in a sequential fashion forming a multimeric L10(L12)X complex.

Forms part of the ribosomal stalk which helps the ribosome interact with GTP-bound translation factors. The chain is Large ribosomal subunit protein uL11 from Methanococcus maripaludis (strain C5 / ATCC BAA-1333).